A 249-amino-acid polypeptide reads, in one-letter code: Phosphomannomutase (249 aa).

Catalysis depends on Asp-15, which acts as the Nucleophile. 2 residues coordinate Mg(2+): Asp-15 and Asp-17. Asp-17 (proton donor/acceptor) is an active-site residue. Alpha-D-mannose 1-phosphate is bound by residues Arg-24, Arg-126, Arg-137, Arg-144, Ser-182, and Asp-184. Mg(2+) is bound by residues Asp-210, Phe-222, and Thr-227.

The protein belongs to the eukaryotic PMM family. In terms of assembly, homodimer. The cofactor is Mg(2+). Expressed in roots, leaves, flag leaves and immature spikes.

It localises to the cytoplasm. It catalyses the reaction alpha-D-mannose 1-phosphate = D-mannose 6-phosphate. The protein operates within nucleotide-sugar biosynthesis; GDP-alpha-D-mannose biosynthesis; alpha-D-mannose 1-phosphate from D-fructose 6-phosphate: step 2/2. Catalyzes the interconversion of mannose-6-phosphate to mannose-1-phosphate, the precursor for the synthesis of GDP-mannose. GDP-mannose is an essential sugar nucleotide for the synthesis of D-mannose-containing cell wall polysaccharides (galactomannans and glucomannans), glycolipids, glycoproteins and the antioxidant L-ascorbate. Can complement the yeast temperature-sensitive mutant sec53-6. This Triticum aestivum (Wheat) protein is Phosphomannomutase.